Consider the following 93-residue polypeptide: Cobalt transport protein CbiN (93 aa).

The next 2 helical transmembrane spans lie at 5-25 (LMLLAMVVALVILPFFINHGG) and 63-83 (LLFTLQGSLGAAVIFYILGYC).

Belongs to the CbiN family. As to quaternary structure, forms an energy-coupling factor (ECF) transporter complex composed of an ATP-binding protein (A component, CbiO), a transmembrane protein (T component, CbiQ) and 2 possible substrate-capture proteins (S components, CbiM and CbiN) of unknown stoichimetry.

The protein localises to the cell inner membrane. It functions in the pathway cofactor biosynthesis; adenosylcobalamin biosynthesis. Its function is as follows. Part of the energy-coupling factor (ECF) transporter complex CbiMNOQ involved in cobalt import. The chain is Cobalt transport protein CbiN from Salmonella agona (strain SL483).